Reading from the N-terminus, the 693-residue chain is Translation factor GUF1 homolog, chloroplastic (693 aa).

Residues 1-51 (MATDLSSSSTLLLSRNCKTPPFYHTTNSLSLSKTHHLYASRNAVVSRLRLL) constitute a chloroplast transit peptide. The tr-type G domain occupies 86 to 267 (SNIRNFCIIA…AIVERIPSPR (182 aa)). Residues 95 to 102 (AHIDHGKS), 160 to 164 (DTPGH), and 214 to 217 (NKID) contribute to the GTP site.

This sequence belongs to the TRAFAC class translation factor GTPase superfamily. Classic translation factor GTPase family. LepA subfamily.

It localises to the plastid. The protein localises to the chloroplast. It carries out the reaction GTP + H2O = GDP + phosphate + H(+). Functionally, promotes chloroplast protein synthesis. May act as a fidelity factor of the translation reaction, by catalyzing a one-codon backward translocation of tRNAs on improperly translocated ribosomes. The sequence is that of Translation factor GUF1 homolog, chloroplastic from Ricinus communis (Castor bean).